The primary structure comprises 670 residues: Soluble lamin-associated protein of 75 kDa (670 aa).

Disordered stretches follow at residues 273–301 (PKRP…SSEM) and 314–670 (STSE…AKLT). A Phosphoserine modification is found at Ser-350. Residues 358–375 (SQTSLTASINKLESTARP) show a composition bias toward polar residues. Positions 378–387 (SSEEFLEEEP) are enriched in acidic residues. Ser-379 is subject to Phosphoserine. The span at 414-423 (EKQDGEKESE) shows a compositional bias: basic and acidic residues. A compositionally biased stretch (acidic residues) spans 442-453 (TEEEDSTSEVLD). At Ser-449 the chain carries Phosphoserine. Positions 460 to 470 (PFNSSEDSTNL) are enriched in polar residues. 2 stretches are compositionally biased toward basic and acidic residues: residues 479–494 (KPPE…RIPD) and 504–514 (SDEKGHMEEKL). Ser-515 is subject to Phosphoserine. 2 stretches are compositionally biased toward polar residues: residues 558–569 (ENLSPNTTSSLE) and 579–591 (PQET…QSSL). 3 positions are modified to phosphoserine: Ser-615, Ser-618, and Ser-635. Over residues 651–670 (NLRRKAKGHKGPAKKKAKLT) the composition is skewed to basic residues.

This sequence belongs to the FAM169 family.

The protein localises to the nucleus envelope. Its subcellular location is the nucleus inner membrane. The chain is Soluble lamin-associated protein of 75 kDa (FAM169A) from Homo sapiens (Human).